The following is a 121-amino-acid chain: MARIAGVDLPKKKRIEYGLTYIYGIGLHTSRKILDKTGISYDKRVHELSEDEAAAIRKEIQENYMVEGDLRKQVAMDIKALMDLGSFRGLRHRKGLPVRGQKTKTNARTRKGKRKTVGAKS.

A disordered region spans residues 93–121 (RKGLPVRGQKTKTNARTRKGKRKTVGAKS).

Belongs to the universal ribosomal protein uS13 family. As to quaternary structure, part of the 30S ribosomal subunit. Forms a loose heterodimer with protein S19. Forms two bridges to the 50S subunit in the 70S ribosome.

Located at the top of the head of the 30S subunit, it contacts several helices of the 16S rRNA. In the 70S ribosome it contacts the 23S rRNA (bridge B1a) and protein L5 of the 50S subunit (bridge B1b), connecting the 2 subunits; these bridges are implicated in subunit movement. Contacts the tRNAs in the A and P-sites. In Campylobacter lari (strain RM2100 / D67 / ATCC BAA-1060), this protein is Small ribosomal subunit protein uS13.